A 492-amino-acid chain; its full sequence is 3-octaprenyl-4-hydroxybenzoate carboxy-lyase (492 aa).

Asn175 contacts Mn(2+). Residues 178–180, 192–194, and 197–198 contribute to the prenylated FMN site; these read IYR, RWL, and RG. Glu241 serves as a coordination point for Mn(2+). The active-site Proton donor is the Asp290.

This sequence belongs to the UbiD family. In terms of assembly, homohexamer. Prenylated FMN serves as cofactor. Mn(2+) is required as a cofactor.

Its subcellular location is the cell membrane. It catalyses the reaction a 4-hydroxy-3-(all-trans-polyprenyl)benzoate + H(+) = a 2-(all-trans-polyprenyl)phenol + CO2. The protein operates within cofactor biosynthesis; ubiquinone biosynthesis. Functionally, catalyzes the decarboxylation of 3-octaprenyl-4-hydroxy benzoate to 2-octaprenylphenol, an intermediate step in ubiquinone biosynthesis. This is 3-octaprenyl-4-hydroxybenzoate carboxy-lyase from Salmonella typhimurium (strain LT2 / SGSC1412 / ATCC 700720).